Consider the following 272-residue polypeptide: Glycosylphosphatidylinositol anchor biosynthesis protein 11 (272 aa).

Residues 21-31 (QSTSTTKSTPG) are compositionally biased toward polar residues. Positions 21-48 (QSTSTTKSTPGSQATESSTTTAGSSSSL) are disordered. A compositionally biased stretch (low complexity) spans 32–48 (SQATESSTTTAGSSSSL). The next 5 membrane-spanning stretches (helical) occupy residues 91–111 (VMLNALPVVAAFQMTYALLCL), 145–165 (LLASVLTSIVTPFLYFAMVLF), 177–197 (FLCAAHLALLTLFPLFYVHGV), 215–235 (TFGGLVGGIVGAWLGAVPIPL), and 248–268 (ILCGAYGGYLLGRVLGGTLFW).

It belongs to the PIGF family.

The protein localises to the endoplasmic reticulum membrane. It functions in the pathway glycolipid biosynthesis; glycosylphosphatidylinositol-anchor biosynthesis. Its function is as follows. Acts in the GPI biosynthetic pathway between GlcNAc-PI synthesis and GPI transfer to protein. In Neurospora crassa (strain ATCC 24698 / 74-OR23-1A / CBS 708.71 / DSM 1257 / FGSC 987), this protein is Glycosylphosphatidylinositol anchor biosynthesis protein 11 (gpi-11).